We begin with the raw amino-acid sequence, 357 residues long: MNDLRLKKDRKLLEILKTMAPGTDMREGLENILRAKTGGLVVLGDNEEVMKLSDGGFKINSEYSASYIYELAKMDGAIILSSDLKKIVRANVQLVPDSSIPTFETGTRHRTAHRVAKQTGNVVVAISQRRNVITIYKDDIKYILRDSSIILARANQAIQTLEKYVAVLDRVMGNLNLLEFEDLCTLHDVVAAIQRTEMVMRVVTEIDRYICELGNEGRLISMQLNELVKNVEQDGMLIIRDYCQNEMNYSKVCETIQSMSSEEFLNSEAISKVMGYGDVPLIDTLISPRGYRMTSKIPRIPFIVIENLVKNFKELKKILEASHEDLDKVEGIGEARARAIKSGLRKLKEQTIIRKQL.

The region spanning 9–147 is the DAC domain; that stretch reads DRKLLEILKT…DDIKYILRDS (139 aa). ATP-binding positions include glycine 76, leucine 94, and 107-111; that span reads TRHRT.

It belongs to the DisA family. In terms of assembly, homooctamer. The cofactor is Mg(2+).

The enzyme catalyses 2 ATP = 3',3'-c-di-AMP + 2 diphosphate. In terms of biological role, participates in a DNA-damage check-point that is active prior to asymmetric division when DNA is damaged. DisA forms globular foci that rapidly scan along the chromosomes during sporulation, searching for lesions. When a lesion is present, DisA pauses at the lesion site. This triggers a cellular response that culminates in a temporary block in sporulation initiation. Its function is as follows. Also has diadenylate cyclase activity, catalyzing the condensation of 2 ATP molecules into cyclic di-AMP (c-di-AMP). c-di-AMP acts as a signaling molecule that couples DNA integrity with progression of sporulation. The rise in c-di-AMP level generated by DisA while scanning the chromosome, operates as a positive signal that advances sporulation; upon encountering a lesion, the DisA focus arrests at the damaged site and halts c-di-AMP synthesis. This is DNA integrity scanning protein DisA from Clostridium acetobutylicum (strain ATCC 824 / DSM 792 / JCM 1419 / IAM 19013 / LMG 5710 / NBRC 13948 / NRRL B-527 / VKM B-1787 / 2291 / W).